Consider the following 424-residue polypeptide: Glucose-1-phosphate adenylyltransferase (424 aa).

Alpha-D-glucose 1-phosphate is bound by residues Y112, G177, 192-193 (EK), and S210.

The protein belongs to the bacterial/plant glucose-1-phosphate adenylyltransferase family. In terms of assembly, homotetramer.

The catalysed reaction is alpha-D-glucose 1-phosphate + ATP + H(+) = ADP-alpha-D-glucose + diphosphate. Its pathway is glycan biosynthesis; glycogen biosynthesis. Its function is as follows. Involved in the biosynthesis of ADP-glucose, a building block required for the elongation reactions to produce glycogen. Catalyzes the reaction between ATP and alpha-D-glucose 1-phosphate (G1P) to produce pyrophosphate and ADP-Glc. This chain is Glucose-1-phosphate adenylyltransferase, found in Methylococcus capsulatus (strain ATCC 33009 / NCIMB 11132 / Bath).